Consider the following 451-residue polypeptide: Gamma-aminobutyric acid receptor subunit alpha-2 (451 aa).

An N-terminal signal peptide occupies residues 1 to 28 (MKTKLNIYNMQFLLFVFLVWDPARLVLA). Topologically, residues 29–249 (NIQEDEAKNN…MTAHFHLKRK (221 aa)) are extracellular. A glycan (N-linked (GlcNAc...) asparagine) is linked at Asn-38. Arg-94 contributes to the 4-aminobutanoate binding site. Residue Asn-138 is glycosylated (N-linked (GlcNAc...) asparagine). Thr-157 contributes to the 4-aminobutanoate binding site. Cys-166 and Cys-180 are joined by a disulfide. The helical transmembrane segment at 250–270 (IGYFVIQTYLPCIMTVILSQV) threads the bilayer. Residues 271–280 (SFWLNRESVP) lie on the Cytoplasmic side of the membrane. A helical transmembrane segment spans residues 281–300 (ARTVFGVTTVLTMTTLSISA). At 301–311 (RNSLPKVAYAT) the chain is on the extracellular side. A helical transmembrane segment spans residues 312–332 (AMDWFIAVCYAFVFSALIEFA). Residues 333–420 (TVNYFTKRGW…FNSVSKIDRM (88 aa)) lie on the Cytoplasmic side of the membrane. Residues 421–441 (SRIVFPVLFGTFNLVYWATYL) form a helical membrane-spanning segment. Topologically, residues 442–451 (NREPVLGVSP) are extracellular.

This sequence belongs to the ligand-gated ion channel (TC 1.A.9) family. Gamma-aminobutyric acid receptor (TC 1.A.9.5) subfamily. GABRA2 sub-subfamily. Heteropentamer, formed by a combination of alpha (GABRA1-6), beta (GABRB1-3), gamma (GABRG1-3), delta (GABRD), epsilon (GABRE), rho (GABRR1-3), pi (GABRP) and theta (GABRQ) subunits, each subunit exhibiting distinct physiological and pharmacological properties. Interacts with UBQLN1. Interacts with KIF21B. Interacts with LHFPL4. Interacts with SHISA7; interaction leads to the regulation of GABA(A) receptor trafficking, channel deactivation kinetics and pharmacology. In terms of processing, glycosylated.

It localises to the postsynaptic cell membrane. Its subcellular location is the cell membrane. The protein localises to the cytoplasmic vesicle membrane. It is found in the cell projection. The protein resides in the dendrite. It catalyses the reaction chloride(in) = chloride(out). Activated by pentobarbital. Inhibited by the antagonist bicuculline. In terms of biological role, alpha subunit of the heteropentameric ligand-gated chloride channel gated by gamma-aminobutyric acid (GABA), a major inhibitory neurotransmitter in the brain. GABA-gated chloride channels, also named GABA(A) receptors (GABAAR), consist of five subunits arranged around a central pore and contain GABA active binding site(s) located at the alpha and beta subunit interfaces. When activated by GABA, GABAARs selectively allow the flow of chloride anions across the cell membrane down their electrochemical gradient. Chloride influx into the postsynaptic neuron following GABAAR opening decreases the neuron ability to generate a new action potential, thereby reducing nerve transmission. The alpha-2 subunit exhibits synaptogenic activity together with beta-2 and very little to no activity together with beta-3, the gamma-2 subunit being necessary but not sufficient to induce rapid synaptic contacts formation. This Homo sapiens (Human) protein is Gamma-aminobutyric acid receptor subunit alpha-2.